The chain runs to 166 residues: Urease accessory protein UreE (166 aa).

This sequence belongs to the UreE family.

The protein localises to the cytoplasm. Involved in urease metallocenter assembly. Binds nickel. Probably functions as a nickel donor during metallocenter assembly. This is Urease accessory protein UreE from Azotobacter vinelandii (strain DJ / ATCC BAA-1303).